A 114-amino-acid polypeptide reads, in one-letter code: WRMLWEHNSTIVVMLTKLREMGRDKCHQYWPAERSARYQYFVVDPMSEYSMHQYILREFKVTDARDGQSRTVRQFQFTDWPEQGVPKSGEGFIDFIGQVHKTKEQFGQEGPITI.

Residues tryptophan 1–isoleucine 114 form the Tyrosine-protein phosphatase domain. Glutamate 82 serves as a coordination point for substrate.

This sequence belongs to the protein-tyrosine phosphatase family.

The enzyme catalyses O-phospho-L-tyrosyl-[protein] + H2O = L-tyrosyl-[protein] + phosphate. The protein is Tyrosine-protein phosphatase 13 (STY-13) of Styela plicata (Wrinkled sea squirt).